Consider the following 421-residue polypeptide: UPF0229 protein lpp2857 (421 aa).

The tract at residues 83–110 is disordered; it reads IAGDRIKRPSGGGAGGAGGNASDSGEGE. The span at 92–101 shows a compositional bias: gly residues; that stretch reads SGGGAGGAGG.

This sequence belongs to the UPF0229 family.

The protein is UPF0229 protein lpp2857 of Legionella pneumophila (strain Paris).